The sequence spans 372 residues: N-methyl-L-tryptophan oxidase (372 aa).

4-34 is an FAD binding site; it reads DLIIIGSGSVGAAAGYYATRAGLNVLMTDAH. Position 308 is an S-8alpha-FAD cysteine (Cys308).

It belongs to the MSOX/MTOX family. MTOX subfamily. As to quaternary structure, monomer. FAD is required as a cofactor.

The enzyme catalyses N(alpha)-methyl-L-tryptophan + O2 + H2O = L-tryptophan + formaldehyde + H2O2. Catalyzes the oxidative demethylation of N-methyl-L-tryptophan. This chain is N-methyl-L-tryptophan oxidase, found in Escherichia coli O1:K1 / APEC.